An 83-amino-acid chain; its full sequence is Small ribosomal subunit protein bS20 (83 aa).

The tract at residues 60–83 (ASKGLIHKNKASRDKSRLAAKLAN) is disordered.

The protein belongs to the bacterial ribosomal protein bS20 family.

Functionally, binds directly to 16S ribosomal RNA. The polypeptide is Small ribosomal subunit protein bS20 (Streptococcus thermophilus (strain CNRZ 1066)).